A 364-amino-acid chain; its full sequence is Chaperone protein DnaJ (364 aa).

The J domain maps to 4 to 69 (DYYEILGLSK…NKKAKYDRFG (66 aa)). A CR-type zinc finger spans residues 135–213 (GYKNNINITR…CKGKGSLTKQ (79 aa)). Zn(2+) is bound by residues cysteine 148, cysteine 151, cysteine 165, cysteine 168, cysteine 187, cysteine 190, cysteine 201, and cysteine 204. 4 CXXCXGXG motif repeats span residues 148–155 (CDSCLGKK), 165–172 (CNMCNGSG), 187–194 (CSKCYGEG), and 201–208 (CKSCKGKG).

This sequence belongs to the DnaJ family. In terms of assembly, homodimer. Requires Zn(2+) as cofactor.

It localises to the cytoplasm. Participates actively in the response to hyperosmotic and heat shock by preventing the aggregation of stress-denatured proteins and by disaggregating proteins, also in an autonomous, DnaK-independent fashion. Unfolded proteins bind initially to DnaJ; upon interaction with the DnaJ-bound protein, DnaK hydrolyzes its bound ATP, resulting in the formation of a stable complex. GrpE releases ADP from DnaK; ATP binding to DnaK triggers the release of the substrate protein, thus completing the reaction cycle. Several rounds of ATP-dependent interactions between DnaJ, DnaK and GrpE are required for fully efficient folding. Also involved, together with DnaK and GrpE, in the DNA replication of plasmids through activation of initiation proteins. The polypeptide is Chaperone protein DnaJ (Borreliella burgdorferi (strain ATCC 35210 / DSM 4680 / CIP 102532 / B31) (Borrelia burgdorferi)).